A 338-amino-acid polypeptide reads, in one-letter code: tRNA N6-adenosine threonylcarbamoyltransferase (338 aa).

His-111 and His-115 together coordinate Fe cation. Substrate-binding positions include 134–138, Asp-167, Gly-180, and Asn-272; that span reads LVSGG. Fe cation is bound at residue Asp-300.

It belongs to the KAE1 / TsaD family. The cofactor is Fe(2+).

The protein localises to the cytoplasm. It catalyses the reaction L-threonylcarbamoyladenylate + adenosine(37) in tRNA = N(6)-L-threonylcarbamoyladenosine(37) in tRNA + AMP + H(+). Required for the formation of a threonylcarbamoyl group on adenosine at position 37 (t(6)A37) in tRNAs that read codons beginning with adenine. Is involved in the transfer of the threonylcarbamoyl moiety of threonylcarbamoyl-AMP (TC-AMP) to the N6 group of A37, together with TsaE and TsaB. TsaD likely plays a direct catalytic role in this reaction. The sequence is that of tRNA N6-adenosine threonylcarbamoyltransferase from Shewanella sp. (strain ANA-3).